The chain runs to 165 residues: UPF0114 protein ESA_00283 (165 aa).

A run of 3 helical transmembrane segments spans residues 15 to 35, 53 to 73, and 136 to 156; these read LLAP…VKFF, LILL…LVMV, and LMWY…MGYL.

Belongs to the UPF0114 family.

Its subcellular location is the cell membrane. In Cronobacter sakazakii (strain ATCC BAA-894) (Enterobacter sakazakii), this protein is UPF0114 protein ESA_00283.